The sequence spans 103 residues: G0/G1 switch protein 2 (103 aa).

The tract at residues 80-103 is disordered; the sequence is LQEKGKQQDTVLGGRALSNRQHAS.

Directly interacts with BCL2; this interaction prevents the formation of the anti-apoptotic BAX-BCL2 complex. In terms of tissue distribution, widely expressed with highest levels in peripheral blood, skeletal muscle and heart, followed by kidney and liver.

Its subcellular location is the mitochondrion. Promotes apoptosis by binding to BCL2, hence preventing the formation of protective BCL2-BAX heterodimers. The protein is G0/G1 switch protein 2 (G0S2) of Homo sapiens (Human).